A 241-amino-acid polypeptide reads, in one-letter code: Uridylate kinase (241 aa).

13-16 is an ATP binding site; it reads KVSG. Gly-55 is a binding site for UMP. Residues Gly-56 and Arg-60 each contribute to the ATP site. UMP-binding positions include Asp-75 and 136-143; that span reads TGNPFFTT. Thr-163, Gln-164, Tyr-169, and Asp-172 together coordinate ATP.

This sequence belongs to the UMP kinase family. Homohexamer.

Its subcellular location is the cytoplasm. The catalysed reaction is UMP + ATP = UDP + ADP. Its pathway is pyrimidine metabolism; CTP biosynthesis via de novo pathway; UDP from UMP (UMPK route): step 1/1. With respect to regulation, inhibited by UTP. Its function is as follows. Catalyzes the reversible phosphorylation of UMP to UDP. The sequence is that of Uridylate kinase from Parvibaculum lavamentivorans (strain DS-1 / DSM 13023 / NCIMB 13966).